Reading from the N-terminus, the 205-residue chain is Putative protein phosphatase inhibitor 2-like protein 1 (205 aa).

4 disordered regions span residues 1 to 44, 64 to 92, 107 to 148, and 171 to 205; these read MAAS…SKKS, GLMKIDEPSTPYHSTMGDDEDACSDTETT, AEGL…TLHY, and VEEMLETAHGESMNTEESNQGSTASDQQQNKSRSS. Required for binding PPP1CC stretches follow at residues 12 to 17 and 43 to 55; these read KGILKD and KSQKWDEMNILAT. Polar residues predominate over residues 17–26; that stretch reads DNTSTTSSMV. Over residues 30–44 the composition is skewed to basic and acidic residues; the sequence is EHPRGSVHEQLSKKS. Residue Thr73 is modified to Phosphothreonine; by GSK3. 2 stretches are compositionally biased toward acidic residues: residues 80-91 and 121-130; these read GDDEDACSDTET and SSGEEDSDLS. Ser87 carries the phosphoserine; by CK2 modification. Basic and acidic residues predominate over residues 131–144; that stretch reads PEEREKKRQFEMRR. Residues 147–150 form a required for binding PPP1CC catalytic center, displacing metal ions and inhibition of PPP1CC catalytic activity region; the sequence is HYNE. Over residues 182–205 the composition is skewed to polar residues; sequence SMNTEESNQGSTASDQQQNKSRSS.

This sequence belongs to the protein phosphatase inhibitor 2 family.

Inhibitor of protein-phosphatase 1. The protein is Putative protein phosphatase inhibitor 2-like protein 1 (PPP1R2P1) of Homo sapiens (Human).